Consider the following 605-residue polypeptide: Isocitrate dehydrogenase kinase/phosphatase (605 aa).

Residues 327-333 (APGIKGL) and lysine 348 each bind ATP. Aspartate 383 is an active-site residue.

It belongs to the AceK family.

Its subcellular location is the cytoplasm. The enzyme catalyses L-seryl-[isocitrate dehydrogenase] + ATP = O-phospho-L-seryl-[isocitrate dehydrogenase] + ADP + H(+). Bifunctional enzyme which can phosphorylate or dephosphorylate isocitrate dehydrogenase (IDH) on a specific serine residue. This is a regulatory mechanism which enables bacteria to bypass the Krebs cycle via the glyoxylate shunt in response to the source of carbon. When bacteria are grown on glucose, IDH is fully active and unphosphorylated, but when grown on acetate or ethanol, the activity of IDH declines drastically concomitant with its phosphorylation. The protein is Isocitrate dehydrogenase kinase/phosphatase of Burkholderia orbicola (strain AU 1054).